Consider the following 445-residue polypeptide: Coronin-A (445 aa).

WD repeat units lie at residues G77–S117, G127–T167, G170–E209, and D259–H299. Positions K410–T444 form a coiled coil.

The protein belongs to the WD repeat coronin family. In terms of assembly, binds to F-actin.

The protein localises to the cell surface. Required for normal motility. Participates in cytokinesis. In Dictyostelium discoideum (Social amoeba), this protein is Coronin-A (corA).